A 147-amino-acid polypeptide reads, in one-letter code: UPF0735 ACT domain-containing protein RBAM_024960 (147 aa).

In terms of domain architecture, ACT spans 70–145 (TLFFHLEDRS…FIEKVEILGS (76 aa)).

This sequence belongs to the UPF0735 family.

In Bacillus velezensis (strain DSM 23117 / BGSC 10A6 / LMG 26770 / FZB42) (Bacillus amyloliquefaciens subsp. plantarum), this protein is UPF0735 ACT domain-containing protein RBAM_024960.